Reading from the N-terminus, the 344-residue chain is Photosystem II protein D1 (344 aa).

An N-acetylthreonine modification is found at T2. T2 carries the post-translational modification Phosphothreonine. Helical transmembrane passes span 29 to 46 (YIGWFGCLMIPTLLTATS), 118 to 133 (HFFLGICAYMGREWEL), and 142 to 156 (WIAVAYSAPVAAATA). Residue H118 coordinates chlorophyll a. Y126 is a binding site for pheophytin a. [CaMn4O5] cluster contacts are provided by D170 and E189. Residues 197-218 (FHMLGVAGVFGGSLFSAMHGSL) form a helical membrane-spanning segment. H198 lines the chlorophyll a pocket. Residues H215 and 264–265 (SF) each bind a quinone. H215 provides a ligand contact to Fe cation. H272 is a Fe cation binding site. The chain crosses the membrane as a helical span at residues 274 to 288 (FLAAWPVIGIWFTAL). H332, E333, D342, and A344 together coordinate [CaMn4O5] cluster.

The protein belongs to the reaction center PufL/M/PsbA/D family. In terms of assembly, PSII is composed of 1 copy each of membrane proteins PsbA, PsbB, PsbC, PsbD, PsbE, PsbF, PsbH, PsbI, PsbJ, PsbK, PsbL, PsbM, PsbT, PsbX, PsbY, PsbZ, Psb30/Ycf12, at least 3 peripheral proteins of the oxygen-evolving complex and a large number of cofactors. It forms dimeric complexes. The cofactor is The D1/D2 heterodimer binds P680, chlorophylls that are the primary electron donor of PSII, and subsequent electron acceptors. It shares a non-heme iron and each subunit binds pheophytin, quinone, additional chlorophylls, carotenoids and lipids. D1 provides most of the ligands for the Mn4-Ca-O5 cluster of the oxygen-evolving complex (OEC). There is also a Cl(-1) ion associated with D1 and D2, which is required for oxygen evolution. The PSII complex binds additional chlorophylls, carotenoids and specific lipids.. In terms of processing, tyr-161 forms a radical intermediate that is referred to as redox-active TyrZ, YZ or Y-Z.

It localises to the plastid. The protein resides in the chloroplast thylakoid membrane. The enzyme catalyses 2 a plastoquinone + 4 hnu + 2 H2O = 2 a plastoquinol + O2. Functionally, photosystem II (PSII) is a light-driven water:plastoquinone oxidoreductase that uses light energy to abstract electrons from H(2)O, generating O(2) and a proton gradient subsequently used for ATP formation. It consists of a core antenna complex that captures photons, and an electron transfer chain that converts photonic excitation into a charge separation. The D1/D2 (PsbA/PsbD) reaction center heterodimer binds P680, the primary electron donor of PSII as well as several subsequent electron acceptors. The polypeptide is Photosystem II protein D1 (Pleurastrum terricola (Filamentous green alga)).